We begin with the raw amino-acid sequence, 41 residues long: Large ribosomal subunit protein bL36 (41 aa).

This sequence belongs to the bacterial ribosomal protein bL36 family.

In Novosphingobium aromaticivorans (strain ATCC 700278 / DSM 12444 / CCUG 56034 / CIP 105152 / NBRC 16084 / F199), this protein is Large ribosomal subunit protein bL36.